Reading from the N-terminus, the 121-residue chain is Small ribosomal subunit protein uS11 (121 aa).

Belongs to the universal ribosomal protein uS11 family. In terms of assembly, part of the 30S ribosomal subunit. Interacts with proteins S7 and S18. Binds to IF-3.

Located on the platform of the 30S subunit, it bridges several disparate RNA helices of the 16S rRNA. Forms part of the Shine-Dalgarno cleft in the 70S ribosome. This Mycoplasmoides gallisepticum (strain R(low / passage 15 / clone 2)) (Mycoplasma gallisepticum) protein is Small ribosomal subunit protein uS11.